Consider the following 523-residue polypeptide: La-related protein 1C (523 aa).

Residues 1–16 are compositionally biased toward low complexity; it reads MASATSNNPASSSMSP. Disordered regions lie at residues 1–52 and 95–313; these read MASA…VRGE and AAGD…VRHP. N-acetylalanine is present on alanine 2. The segment covering 22–31 has biased composition (polar residues); it reads NHGSPTASVA. Low complexity-rich tracts occupy residues 32 to 44 and 146 to 169; these read QSPRRPSRQVSSP and SNKSSSDSLKSLGDVPSSSSASSS. A Phosphoserine modification is found at serine 33. Composition is skewed to polar residues over residues 206–270 and 282–305; these read QRNG…NGNH and HGNQNWTFQRSFNGREGNAQSQRG. Positions 363–452 constitute an HTH La-type RNA-binding domain; it reads HYQDPPLHMK…RDNWQNWVLR (90 aa). The disordered stretch occupies residues 474–523; sequence GNLSVDQSSADPIGGSSSQLQPTEALSDDQQQSSSTAPVSNHNAPDGANR. Over residues 477–516 the composition is skewed to polar residues; sequence SVDQSSADPIGGSSSQLQPTEALSDDQQQSSSTAPVSNHN.

This sequence belongs to the LARP family. As to expression, age-dependent accumulation in rosette leaves.

The protein localises to the cytoplasm. Promotes leaf senescence mediated by abscisic acid (ABA), salicylic acid (SA) and jasmonic acid (MeJA), probably though the induction of expression of senescence-associated genes (SAGs) and defense-related genes. This Arabidopsis thaliana (Mouse-ear cress) protein is La-related protein 1C (LARP1C).